A 178-amino-acid polypeptide reads, in one-letter code: Gamma-crystallin S (178 aa).

Ser-2 is subject to N-acetylserine. Positions 2-5 (SKSV) are N-terminal arm. 2 consecutive Beta/gamma crystallin 'Greek key' domains span residues 6-44 (AKIT…RVTG) and 45-87 (GAWV…KVIH). Residues 88 to 93 (LSSGGQ) are connecting peptide. Beta/gamma crystallin 'Greek key' domains lie at 94-134 (YKLQ…KVLD) and 135-177 (GVWV…RRIM).

The protein belongs to the beta/gamma-crystallin family. Monomer.

Functionally, crystallins are the dominant structural components of the vertebrate eye lens. The polypeptide is Gamma-crystallin S (CRYGS) (Macropus fuliginosus (Western gray kangaroo)).